The sequence spans 113 residues: Large ribosomal subunit protein P2 (113 aa).

The tract at residues 66-113 is disordered; the sequence is PVGGGGAVAAADAAPAAAAGGDKKEAKKEEKKEESESEDDDMGFALFE. Low complexity predominate over residues 73-85; sequence VAAADAAPAAAAG. A compositionally biased stretch (basic and acidic residues) spans 86-99; the sequence is GDKKEAKKEEKKEE. A phosphoserine mark is found at serine 100 and serine 102.

It belongs to the eukaryotic ribosomal protein P1/P2 family. In terms of assembly, P1 and P2 exist as dimers at the large ribosomal subunit.

Its function is as follows. Plays an important role in the elongation step of protein synthesis. The chain is Large ribosomal subunit protein P2 (RpLP2) from Drosophila melanogaster (Fruit fly).